The chain runs to 189 residues: Ribosome hibernation promotion factor (189 aa).

The protein belongs to the HPF/YfiA ribosome-associated protein family. Long HPF subfamily. As to quaternary structure, interacts with 100S ribosomes. Not associated with 70S ribosome monomers, about 1 monomer per ribosome.

The protein localises to the cytoplasm. Its function is as follows. Required for dimerization of active 70S ribosomes into 100S ribosomes in stationary phase; 100S ribosomes are translationally inactive and sometimes present during exponential growth. May not be the only factor implicated. Might negatively regulate the activity of the sigma-54 factor (SigL). The protein is Ribosome hibernation promotion factor (yvyD) of Bacillus subtilis (strain 168).